The sequence spans 167 residues: uncharacterized protein (167 aa).

Residues 39-59 (LSLFSLSPLFLLLSISSLIFS) traverse the membrane as a helical segment. Residues 92-122 (LGTQIEMITQAMTTLESRVTDLQQESNDHRT) are a coiled coil. Residues 134–167 (RDLGDENRPKPTTNKMIATGEQHKGEVSTSLFHD) are disordered. Residues 154-167 (EQHKGEVSTSLFHD) show a composition bias toward basic and acidic residues.

The protein resides in the mitochondrion membrane. This is an uncharacterized protein from Arabidopsis thaliana (Mouse-ear cress).